The primary structure comprises 470 residues: Uronate isomerase (470 aa).

Belongs to the metallo-dependent hydrolases superfamily. Uronate isomerase family.

It catalyses the reaction D-glucuronate = D-fructuronate. It carries out the reaction aldehydo-D-galacturonate = keto-D-tagaturonate. It participates in carbohydrate metabolism; pentose and glucuronate interconversion. The protein is Uronate isomerase of Escherichia coli O157:H7 (strain EC4115 / EHEC).